Reading from the N-terminus, the 55-residue chain is A-type ATP synthase subunit G (55 aa).

As to quaternary structure, has multiple subunits, A(3), B(3), C, D, E, F, G, I and K(x); there may be a few other subunits as well.

It is found in the cell membrane. Functionally, component of the A-type ATP synthase that produces ATP from ADP in the presence of a proton gradient across the membrane. This is A-type ATP synthase subunit G (atpG) from Methanosarcina mazei (strain ATCC BAA-159 / DSM 3647 / Goe1 / Go1 / JCM 11833 / OCM 88) (Methanosarcina frisia).